Here is a 221-residue protein sequence, read N- to C-terminus: Ribosomal RNA large subunit methyltransferase E (221 aa).

Residues glycine 60, tryptophan 62, aspartate 89, aspartate 105, and aspartate 134 each coordinate S-adenosyl-L-methionine. The Proton acceptor role is filled by lysine 174.

It belongs to the class I-like SAM-binding methyltransferase superfamily. RNA methyltransferase RlmE family.

It is found in the cytoplasm. It catalyses the reaction uridine(2552) in 23S rRNA + S-adenosyl-L-methionine = 2'-O-methyluridine(2552) in 23S rRNA + S-adenosyl-L-homocysteine + H(+). In terms of biological role, specifically methylates the uridine in position 2552 of 23S rRNA at the 2'-O position of the ribose in the fully assembled 50S ribosomal subunit. This chain is Ribosomal RNA large subunit methyltransferase E, found in Cupriavidus metallidurans (strain ATCC 43123 / DSM 2839 / NBRC 102507 / CH34) (Ralstonia metallidurans).